The sequence spans 494 residues: Cysteine--tRNA ligase (494 aa).

Position 29 (Cys-29) interacts with Zn(2+). Residues Val-31–His-41 carry the 'HIGH' region motif. 3 residues coordinate Zn(2+): Cys-209, His-234, and Glu-238. The 'KMSKS' region signature appears at Lys-266–Ser-270. Lys-269 contacts ATP.

This sequence belongs to the class-I aminoacyl-tRNA synthetase family. In terms of assembly, monomer. It depends on Zn(2+) as a cofactor.

It is found in the cytoplasm. It catalyses the reaction tRNA(Cys) + L-cysteine + ATP = L-cysteinyl-tRNA(Cys) + AMP + diphosphate. This is Cysteine--tRNA ligase from Geotalea daltonii (strain DSM 22248 / JCM 15807 / FRC-32) (Geobacter daltonii).